The sequence spans 399 residues: Imidazolonepropionase (399 aa).

Positions 1-13 (MSETLYTGISQLA) are enriched in polar residues. The tract at residues 1 to 20 (MSETLYTGISQLATPRPGPQ) is disordered. The Fe(3+) site is built by H74 and H76. Zn(2+) contacts are provided by H74 and H76. Residues R83, Y146, and H176 each contribute to the 4-imidazolone-5-propanoate site. An N-formimidoyl-L-glutamate-binding site is contributed by Y146. H238 contacts Fe(3+). H238 is a binding site for Zn(2+). Q241 provides a ligand contact to 4-imidazolone-5-propanoate. D312 is a binding site for Fe(3+). D312 is a Zn(2+) binding site. Residues N314 and G316 each coordinate N-formimidoyl-L-glutamate. S317 contacts 4-imidazolone-5-propanoate.

This sequence belongs to the metallo-dependent hydrolases superfamily. HutI family. The cofactor is Zn(2+). Requires Fe(3+) as cofactor.

It localises to the cytoplasm. It carries out the reaction 4-imidazolone-5-propanoate + H2O = N-formimidoyl-L-glutamate. It functions in the pathway amino-acid degradation; L-histidine degradation into L-glutamate; N-formimidoyl-L-glutamate from L-histidine: step 3/3. Its function is as follows. Catalyzes the hydrolytic cleavage of the carbon-nitrogen bond in imidazolone-5-propanoate to yield N-formimidoyl-L-glutamate. It is the third step in the universal histidine degradation pathway. The chain is Imidazolonepropionase from Deinococcus radiodurans (strain ATCC 13939 / DSM 20539 / JCM 16871 / CCUG 27074 / LMG 4051 / NBRC 15346 / NCIMB 9279 / VKM B-1422 / R1).